The chain runs to 68 residues: uncharacterized protein (68 aa).

To bacterial proteins yidD.

This is an uncharacterized protein from Haemophilus influenzae (Bacteriophage HP1).